We begin with the raw amino-acid sequence, 264 residues long: Short chain dehydrogenase/reductase nsrJ (264 aa).

NADP(+)-binding residues include I24, D70, N97, and R130. Residues S146 and S147 each act as proton donor in the active site. NADP(+) contacts are provided by Y161, K165, and T196. The active-site Proton acceptor is the Y161. K165 serves as the catalytic Lowers pKa of active site Tyr.

It belongs to the short-chain dehydrogenases/reductases (SDR) family.

It participates in secondary metabolite biosynthesis. In terms of biological role, short chain dehydrogenase/reductase; part of the gene cluster that mediates the biosynthesis of the tetrahydroxanthone dimer neosartorin, which exhibits antibacterial activity. The two different monomeric units appear to be synthesized by the same set of enzymes, among which the Baeyer-Villiger monooxygenase nsrF is the key enzyme for the divergence of the biosynthetic routes. The pathway begins with the synthesis of atrochrysone thioester by the polyketide synthase nsrB. The atrochrysone carboxyl ACP thioesterase nsrC then breaks the thioester bond and releases the atrochrysone carboxylic acid from AacuL. Atrochrysone carboxylic acid is decarboxylated by the decarboxylase nsrE, and oxidized by the anthrone oxygenase nsrD to yield emodin. Emodin is then reduced to emodin hydroquinone by the oxidoreductase nsrR. A-ring reduction by the short chain dehydrogenase nsrJ, dehydration by the scytalone dehydratase-like protein nsrI and probable spontaneous re-oxidation, results in overall deoxygenation to chrysophanol. The Baeyer-Villiger monooxygenase nsrF accepts chrysophanol as a substrate to insert one oxygen atom at two different positions to yield the precursors of both monomric units. NsrF is promiscuous/flexible in interacting with the 2 (non methylated and methylated) aromatic rings of chrysophanol, thus diverging the biosynthetic pathway at this point. After the hydrolysis of the lactones, methylesterification by the methyltransferase nsrG yields respectively moniliphenone and 2,2',6'-trihydroxy-4-methyl-6-methoxya-cyldiphenylmethanone. The next steps are the hydroxylation by the FAD-dependent monooxygenase nsrK, followed by isomerization by the monooxygenase nsrQ. The short chain dehydrogenase/reductase nsrO then catalyzes the C-5 ketoreduction to give the xanthone skeleton of blennolide C and 5-acetylblennolide A. The acetyltransferase nsrL has a strict substrate specificity and uses only blennolide A but not blennolide C to yield 5-acetylblennolide A as the single-acetylated product. In the final step of the biosynthesis, the heterodimerization of the 2 xanthones, blennolide C and 5-acetylblennolide A, is catalyzed by the cytochrome P450 monooxygenase nsrP. NsrP can utilize at least three different xanthones as its substrates to perform the dimerization reaction. The chain is Short chain dehydrogenase/reductase nsrJ from Aspergillus novofumigatus (strain IBT 16806).